The chain runs to 265 residues: RNA-binding protein 7 (265 aa).

Gly2 bears the N-acetylglycine mark. The RRM domain maps to 10–87 (RTLFVGNLET…RPIKIQFRSG (78 aa)). ZCCHC8 binding stretches follow at residues 25–35 (LLFELFHQAGP) and 59–76 (HEVSVPYAMNLLNGIKLF). The interval 91–125 (ASQDASVSYPQHHVGNLSPTSTSPNSYERTVGNVS) is disordered. Residues 107 to 125 (LSPTSTSPNSYERTVGNVS) show a composition bias toward polar residues. Ser136 is subject to Phosphoserine; by MAPKAPK2. Residue Ser137 is modified to Phosphoserine. Arg152 bears the Omega-N-methylarginine mark. Disordered stretches follow at residues 166 to 224 (DQLG…HGSD) and 237 to 265 (DDRNHDGWSHDYDNRRDSSRGGKWPSSRH). Residues 170–196 (FSPSAQPHGHTFNQSSSSQWRQDALSS) show a composition bias toward polar residues. A Phosphoserine modification is found at Ser203. Composition is skewed to basic and acidic residues over residues 207–224 (LADRHYSREQRYSDHGSD) and 237–256 (DDRNHDGWSHDYDNRRDSSR).

As to quaternary structure, component of the nuclear exosome targeting (NEXT) complex composed of MTREX, ZCCHC8, and RBM7 that directs a subset of non-coding short-lived RNAs for exosomal degradation. Interacts with ZCCHC8 and SF3B2/SAP145. Binds to MTREX through ZCCHC8. Interacts with YWHAE and YWHAZ; these interactions are stress-dependent and RBM7 phosphorylation dependent; release RNA from the NEXT complex and may affect RNA targeting to the nuclear RNA exosomome for degradation. Interacts with MEPCE and LARP7, the core subunits of 7SK snRNP; upon genotoxic stress this interaction is enhanced, triggering the release of inactive P-TEFb complex from the core and P-TEFb complex activation. Post-translationally, phosphorylated at Ser-136 by MAPK14/p38-alpha-activated MAPKAPK2/MK2; this phosphorylation is stress-dependent; this phosphorylation decreases its RNA-binding capacity therefore affecting RNA nuclear exosome-mediated degradation. This phosphorylation mediates YWHAE and YWHAZ interactions.

The protein localises to the nucleus. It localises to the nucleoplasm. In terms of biological role, RNA-binding subunit of the trimeric nuclear exosome targeting (NEXT) complex, a complex that functions as an RNA exosome cofactor that directs a subset of non-coding short-lived RNAs for exosomal degradation. NEXT is involved in surveillance and turnover of aberrant transcripts and non-coding RNAs. Binds preferentially polyuridine sequences and associates with newly synthesized RNAs, including pre-mRNAs and short-lived exosome substrates such as promoter upstream transcripts (PROMPTs), enhancer RNAs (eRNAs), and 3'-extended products from small nuclear RNAs (snRNAs). Participates in several biological processes including DNA damage response (DDR) and stress response. During stress response, activation of the p38MAPK-MK2 pathway decreases RBM7-RNA-binding and subsequently the RNA exosome degradation activities, thereby modulating the turnover of non-coding transcriptome. Participates in DNA damage response (DDR), through its interaction with MEPCE and LARP7, the core subunits of 7SK snRNP complex, that release the positive transcription elongation factor b (P-TEFb) complex from the 7SK snRNP. In turn, activation of P-TEFb complex induces the transcription of P-TEFb-dependent DDR genes to promote cell viability. The protein is RNA-binding protein 7 of Mus musculus (Mouse).